Consider the following 223-residue polypeptide: DNA mismatch repair protein MutH (223 aa).

Belongs to the MutH family.

The protein localises to the cytoplasm. Its function is as follows. Sequence-specific endonuclease that cleaves unmethylated GATC sequences. It is involved in DNA mismatch repair. This Shewanella baltica (strain OS195) protein is DNA mismatch repair protein MutH.